A 212-amino-acid polypeptide reads, in one-letter code: Redox-sensing transcriptional repressor Rex (212 aa).

A DNA-binding region (H-T-H motif) is located at residues 17 to 56; it reads LYYRIFKRFNTDGIEKASSKQIADALGIDSATVRRDFSYF. 91–96 contributes to the NAD(+) binding site; sequence GCGNIG.

This sequence belongs to the transcriptional regulatory Rex family. As to quaternary structure, homodimer.

It localises to the cytoplasm. Modulates transcription in response to changes in cellular NADH/NAD(+) redox state. This Streptococcus agalactiae serotype III (strain NEM316) protein is Redox-sensing transcriptional repressor Rex.